The primary structure comprises 400 residues: MAKQKFDRSKPHCNVGTIGHVDHGKTTLTAAITRTLSTKGWADFRAYDQIDNAPEEKARGLTIAISHIEYQTETRHYAHIDCPGHADYIKNMITGAAQMDGAILVVSAPDGPMPQTREHVLLIHQVEVPAVVVALNKCDMMDDEELLELVELEVRELLTKNSFPGDEIPIVRVSAIKALECGCGKRECEWCGRIWKLMDAVDSYIPIPPRPVDKPFLMKVEDVFSIKGRGTVATGRVERGIIKGGDEVDLVGLHHEPRKIVVTSLEMFHKILDSAEPGDAVGLLLRGVEREDIERGMVLAKPGSIKPHINAEAEVYVLSKDEGGRHTPFFNGYKPQFFFGTTDVTGEIHLPEGVEMVVPGDHVKMKISTIYPVAMEKGMRFAIREGGKTVGAGAISQVLS.

Residues K10–R210 form the tr-type G domain. The tract at residues G19 to T26 is G1. A GTP-binding site is contributed by G19 to T26. T26 serves as a coordination point for Mg(2+). Residues G60 to A64 form a G2 region. The interval D81 to G84 is G3. GTP contacts are provided by residues D81–H85 and N136–D139. The G4 stretch occupies residues N136–D139. The interval S174 to I176 is G5.

The protein belongs to the TRAFAC class translation factor GTPase superfamily. Classic translation factor GTPase family. EF-Tu/EF-1A subfamily. As to quaternary structure, monomer.

Its subcellular location is the cytoplasm. It catalyses the reaction GTP + H2O = GDP + phosphate + H(+). In terms of biological role, GTP hydrolase that promotes the GTP-dependent binding of aminoacyl-tRNA to the A-site of ribosomes during protein biosynthesis. The chain is Elongation factor Tu from Dehalococcoides mccartyi (strain ATCC BAA-2266 / KCTC 15142 / 195) (Dehalococcoides ethenogenes (strain 195)).